We begin with the raw amino-acid sequence, 102 residues long: Synaptobrevin-like protein 5 (102 aa).

Positions 17–77 (KIMRTRRELD…VKIKREMSWK (61 aa)) constitute a v-SNARE coiled-coil homology domain.

This Caenorhabditis elegans protein is Synaptobrevin-like protein 5 (snb-5).